The following is a 248-amino-acid chain: DCN1-like protein 4 (248 aa).

The disordered stretch occupies residues 1–35 (MPRGKRRAADTISDNMDHGQPKRARTSYTSIPTQQ). Residues 26–35 (TSYTSIPTQQ) are compositionally biased toward polar residues. Residues 47-235 (FSQKRCMAWF…MLDEFVEWLR (189 aa)) enclose the DCUN1 domain.

Its subcellular location is the nucleus. In terms of biological role, inhibits neddylation of cullin components of SCF-type E3 ubiquitin ligase complexes and thus regulates SCF-type complex activity. Essential for development. Function inhibits cell proliferation and cell growth. In Drosophila melanogaster (Fruit fly), this protein is DCN1-like protein 4.